The following is a 326-amino-acid chain: Photosystem II assembly factor Ycf39 (326 aa).

Belongs to the NmrA-type oxidoreductase family. Ycf39 subfamily. Purified in several chlorophyll- and carotenoid-containing complexes, including photosystem II (PSII) assembly intermediate complex RCII* (iD1, D1, D2, PsbE, PsbF, PsbI, Ycf39, Ycf48, HliC and HliD) and the Ycf39-Hlip complex (Ycf39, HliC, HliD and pigments). Tagged protein does not pull down mature PSII.

It localises to the cellular thylakoid membrane. Functionally, requires HliD to bind pigments. The Ycf39-Hlip complex binds D1 at an early stage of PSII assembly along with Ycf48, ribosomes and ChlG, the last enzyme in chlorophyll biosynthesis; it may be involved in chlorophyll reuse and delivery to D1 in the initial stages of PSII assembly. The Ycf39-Hlip complex efficiently quenches chlorophyll fluorescence, contributing to photoprotection. This Synechocystis sp. (strain ATCC 27184 / PCC 6803 / Kazusa) protein is Photosystem II assembly factor Ycf39.